We begin with the raw amino-acid sequence, 586 residues long: Kelch-like protein 7 (586 aa).

Residues 44–111 (CDVILMVQER…AYTARISVNS (68 aa)) form the BTB domain. The BACK domain maps to 146–248 (CLGISVLAEC…SKNFLSKTVQ (103 aa)). Kelch repeat units lie at residues 294 to 336 (RIAL…FWDN), 337 to 382 (VVYI…AAEG), 383 to 430 (KIYT…EANG), 431 to 481 (LIYV…FVKD), 483 to 528 (IFAV…AVGS), and 530 to 575 (VYVL…CVVD).

As to quaternary structure, homodimer. Component of the BCR(KLHL7) E3 ubiquitin ligase complex.

It is found in the nucleus. The protein resides in the cytoplasm. It participates in protein modification; protein ubiquitination. Substrate-specific adapter of a BCR (BTB-CUL3-RBX1) E3 ubiquitin ligase complex. The BCR(KLHL7) complex acts by mediating ubiquitination and subsequent degradation of substrate proteins. Probably mediates 'Lys-48'-linked ubiquitination. The sequence is that of Kelch-like protein 7 (KLHL7) from Gallus gallus (Chicken).